A 438-amino-acid chain; its full sequence is UDP-N-acetylmuramoylalanine--D-glutamate ligase (438 aa).

112–118 (GSNGKST) is an ATP binding site.

The protein belongs to the MurCDEF family.

The protein resides in the cytoplasm. The catalysed reaction is UDP-N-acetyl-alpha-D-muramoyl-L-alanine + D-glutamate + ATP = UDP-N-acetyl-alpha-D-muramoyl-L-alanyl-D-glutamate + ADP + phosphate + H(+). Its pathway is cell wall biogenesis; peptidoglycan biosynthesis. Cell wall formation. Catalyzes the addition of glutamate to the nucleotide precursor UDP-N-acetylmuramoyl-L-alanine (UMA). This chain is UDP-N-acetylmuramoylalanine--D-glutamate ligase, found in Salmonella choleraesuis (strain SC-B67).